The primary structure comprises 369 residues: Actin-related protein T3 (369 aa).

It belongs to the actin family. As to quaternary structure, interacts with PFN3. In terms of tissue distribution, testis specific (at protein level). Expressed specifically in haploid germ cells.

Its subcellular location is the cytoplasm. It is found in the cytoskeleton. It localises to the nucleus. The chain is Actin-related protein T3 (Actrt3) from Mus musculus (Mouse).